The sequence spans 177 residues: MASTRAAIRYAKAILDLANSKGVAEAVNNDMKSIASAIETNTELSTFIQNPTTTVEVKESALLEVFADVNGVTKGLFHLLFENKRFEILDAIAVEYNKLFDESNGVEVAKVTTAIPMDAALEAKVLAKVATLSDKKITIENVVDPSIIGGFILRIGDNQYNASVANRLQVLKRELSN.

This sequence belongs to the ATPase delta chain family. As to quaternary structure, F-type ATPases have 2 components, F(1) - the catalytic core - and F(0) - the membrane proton channel. F(1) has five subunits: alpha(3), beta(3), gamma(1), delta(1), epsilon(1). F(0) has three main subunits: a(1), b(2) and c(10-14). The alpha and beta chains form an alternating ring which encloses part of the gamma chain. F(1) is attached to F(0) by a central stalk formed by the gamma and epsilon chains, while a peripheral stalk is formed by the delta and b chains.

It localises to the cell inner membrane. Its function is as follows. F(1)F(0) ATP synthase produces ATP from ADP in the presence of a proton or sodium gradient. F-type ATPases consist of two structural domains, F(1) containing the extramembraneous catalytic core and F(0) containing the membrane proton channel, linked together by a central stalk and a peripheral stalk. During catalysis, ATP synthesis in the catalytic domain of F(1) is coupled via a rotary mechanism of the central stalk subunits to proton translocation. In terms of biological role, this protein is part of the stalk that links CF(0) to CF(1). It either transmits conformational changes from CF(0) to CF(1) or is implicated in proton conduction. This Flavobacterium johnsoniae (strain ATCC 17061 / DSM 2064 / JCM 8514 / BCRC 14874 / CCUG 350202 / NBRC 14942 / NCIMB 11054 / UW101) (Cytophaga johnsonae) protein is ATP synthase subunit delta.